A 329-amino-acid polypeptide reads, in one-letter code: Methionyl-tRNA formyltransferase (329 aa).

118-121 (SLLP) serves as a coordination point for (6S)-5,6,7,8-tetrahydrofolate.

Belongs to the Fmt family.

The catalysed reaction is L-methionyl-tRNA(fMet) + (6R)-10-formyltetrahydrofolate = N-formyl-L-methionyl-tRNA(fMet) + (6S)-5,6,7,8-tetrahydrofolate + H(+). Its function is as follows. Attaches a formyl group to the free amino group of methionyl-tRNA(fMet). The formyl group appears to play a dual role in the initiator identity of N-formylmethionyl-tRNA by promoting its recognition by IF2 and preventing the misappropriation of this tRNA by the elongation apparatus. This is Methionyl-tRNA formyltransferase from Corynebacterium urealyticum (strain ATCC 43042 / DSM 7109).